Consider the following 154-residue polypeptide: Myoglobin (154 aa).

In terms of domain architecture, Globin spans 2-148 (GLSDGEWQLV…FRNDMAAKYK (147 aa)). Ser-4 is modified (phosphoserine). His-65 is a binding site for nitrite. Residue His-65 participates in O2 binding. A Phosphothreonine modification is found at Thr-68. Residue His-94 participates in heme b binding.

Belongs to the globin family. In terms of assembly, monomeric.

It is found in the cytoplasm. It localises to the sarcoplasm. It catalyses the reaction Fe(III)-heme b-[protein] + nitric oxide + H2O = Fe(II)-heme b-[protein] + nitrite + 2 H(+). It carries out the reaction H2O2 + AH2 = A + 2 H2O. Functionally, monomeric heme protein which primary function is to store oxygen and facilitate its diffusion within muscle tissues. Reversibly binds oxygen through a pentacoordinated heme iron and enables its timely and efficient release as needed during periods of heightened demand. Depending on the oxidative conditions of tissues and cells, and in addition to its ability to bind oxygen, it also has a nitrite reductase activity whereby it regulates the production of bioactive nitric oxide. Under stress conditions, like hypoxia and anoxia, it also protects cells against reactive oxygen species thanks to its pseudoperoxidase activity. The protein is Myoglobin (MB) of Sus scrofa (Pig).